A 438-amino-acid chain; its full sequence is Chromosomal replication initiator protein DnaA (438 aa).

Residues 1-71 (MTELDSLWEA…VEIVYQRTGQ (71 aa)) are domain I, interacts with DnaA modulators. Residues 71 to 101 (QEIRPDYVLATDPTPLAQTPPRPQSTFKEET) form a domain II region. A disordered region spans residues 81-100 (TDPTPLAQTPPRPQSTFKEE). Residues 102-318 (PLNPEYTFQT…GALMRIRVFS (217 aa)) are domain III, AAA+ region. The ATP site is built by G146, G148, K149, and T150. Residues 319 to 438 (ELHQQPITLK…LVKLKNDLQA (120 aa)) are domain IV, binds dsDNA.

This sequence belongs to the DnaA family. As to quaternary structure, oligomerizes as a right-handed, spiral filament on DNA at oriC.

Its subcellular location is the cytoplasm. In terms of biological role, plays an essential role in the initiation and regulation of chromosomal replication. ATP-DnaA binds to the origin of replication (oriC) to initiate formation of the DNA replication initiation complex once per cell cycle. Binds the DnaA box (a 9 base pair repeat at the origin) and separates the double-stranded (ds)DNA. Forms a right-handed helical filament on oriC DNA; dsDNA binds to the exterior of the filament while single-stranded (ss)DNA is stabiized in the filament's interior. The ATP-DnaA-oriC complex binds and stabilizes one strand of the AT-rich DNA unwinding element (DUE), permitting loading of DNA polymerase. After initiation quickly degrades to an ADP-DnaA complex that is not apt for DNA replication. Binds acidic phospholipids. This chain is Chromosomal replication initiator protein DnaA, found in Limosilactobacillus fermentum (strain NBRC 3956 / LMG 18251) (Lactobacillus fermentum).